A 427-amino-acid chain; its full sequence is Tol-Pal system protein TolB (427 aa).

An N-terminal signal peptide occupies residues 1–23 (MKLLKRLVSVFAIVLAVGSNAFA).

Belongs to the TolB family. As to quaternary structure, the Tol-Pal system is composed of five core proteins: the inner membrane proteins TolA, TolQ and TolR, the periplasmic protein TolB and the outer membrane protein Pal. They form a network linking the inner and outer membranes and the peptidoglycan layer.

The protein localises to the periplasm. Its function is as follows. Part of the Tol-Pal system, which plays a role in outer membrane invagination during cell division and is important for maintaining outer membrane integrity. This Haemophilus influenzae (strain PittGG) protein is Tol-Pal system protein TolB.